The sequence spans 88 residues: Small ribosomal subunit protein uS15 (88 aa).

The protein belongs to the universal ribosomal protein uS15 family. In terms of assembly, part of the 30S ribosomal subunit. Forms a bridge to the 50S subunit in the 70S ribosome, contacting the 23S rRNA.

One of the primary rRNA binding proteins, it binds directly to 16S rRNA where it helps nucleate assembly of the platform of the 30S subunit by binding and bridging several RNA helices of the 16S rRNA. Its function is as follows. Forms an intersubunit bridge (bridge B4) with the 23S rRNA of the 50S subunit in the ribosome. The polypeptide is Small ribosomal subunit protein uS15 (Leptospira borgpetersenii serovar Hardjo-bovis (strain JB197)).